Here is a 166-residue protein sequence, read N- to C-terminus: Large ribosomal subunit protein mL49 (166 aa).

Positions 56–78 are disordered; that stretch reads RIPDPPKHEHYPTPSGWQPPRDP.

This sequence belongs to the mitochondrion-specific ribosomal protein mL49 family. As to quaternary structure, interacts with OXA1L.

The protein resides in the mitochondrion. This Macaca fascicularis (Crab-eating macaque) protein is Large ribosomal subunit protein mL49 (MRPL49).